The sequence spans 281 residues: 3-mercaptopyruvate sulfurtransferase (281 aa).

2 consecutive Rhodanese domains span residues 17–135 (DDPE…LLEE) and 165–278 (HENT…LPVE). Arg-179 serves as a coordination point for substrate. Cys-238 acts as the Cysteine persulfide intermediate in catalysis. Residues 238–244 (CGSGVTA) are substrate specificity.

As to quaternary structure, monomer.

The protein resides in the cytoplasm. The catalysed reaction is 2-oxo-3-sulfanylpropanoate + [thioredoxin]-dithiol = [thioredoxin]-disulfide + hydrogen sulfide + pyruvate + H(+). Its function is as follows. Catalyzes the transfer of sulfur from 3-mercaptopyruvate to a thiol-containing acceptor to form an intramolecular disulfide releasing hydrogen sulfide and pyruvate. May be involved in the enhancement of bacterial growth inhibition by serine. The polypeptide is 3-mercaptopyruvate sulfurtransferase (sseA) (Escherichia coli (strain K12)).